A 238-amino-acid chain; its full sequence is MGRAFEYRRAAKEKRWDKMSKVFPKLAKAITVAAKEGGGDPAMNAKLRTAIANAKAQNMPKDNIDAAIKRASGKDGIFSEITYEGKAAYGVLIFIECTTDNPTRTIANIKSYFNKTPNASILTNGSIEFMFARKSAFEFRTDKNIEELELALIDYGLEELESRESEEGIYHIAYGDYKDFGRLSEGFEHLNIPISKAALQRIPTSPISLSETQMQDIEKLLDKIEDDDDVQAVYTNIE.

This sequence belongs to the TACO1 family.

The protein resides in the cytoplasm. This is Probable transcriptional regulatory protein HH_1604 from Helicobacter hepaticus (strain ATCC 51449 / 3B1).